Here is a 510-residue protein sequence, read N- to C-terminus: NEDD8-activating enzyme E1 regulatory subunit (510 aa).

At alanine 2 the chain carries N-acetylalanine. N6-acetyllysine is present on residues lysine 6 and lysine 317. Residues 307-320 form an interaction with UBA3 region; that stretch reads DMIADSGKYIKLQN.

Belongs to the ubiquitin-activating E1 family. ULA1 subfamily. Heterodimer of UBA3 and NAE1. The complex binds NEDD8 and UBE2M. Binds APP and TP53BP2. Ubiquitinated by TRIP12, leading to its degradation by the proteasome.

It localises to the cell membrane. The protein operates within protein modification; protein neddylation. With respect to regulation, binding of TP53BP2 to the regulatory subunit NAE1 decreases neddylation activity. Regulatory subunit of the dimeric UBA3-NAE1 E1 enzyme. E1 activates NEDD8 by first adenylating its C-terminal glycine residue with ATP, thereafter linking this residue to the side chain of the catalytic cysteine, yielding a NEDD8-UBA3 thioester and free AMP. E1 finally transfers NEDD8 to the catalytic cysteine of UBE2M. Necessary for cell cycle progression through the S-M checkpoint. Overexpression of NAE1 causes apoptosis through deregulation of NEDD8 conjugation. The covalent attachment of NEDD8 to target proteins is known as 'neddylation' and the process is involved in the regulation of cell growth, viability and development. The sequence is that of NEDD8-activating enzyme E1 regulatory subunit (NAE1) from Macaca fascicularis (Crab-eating macaque).